Reading from the N-terminus, the 429-residue chain is Stromal membrane-associated protein 2 (429 aa).

Residues 13–137 (QAVLANLLLE…LDINAFRKEK (125 aa)) form the Arf-GAP domain. The C4-type zinc-finger motif lies at 28 to 51 (CADCQSKGPRWASWNIGVFICIRC). Residue S127 is modified to Phosphoserine. The span at 138–172 (DNKWKRGSEPAPEKKMEPVVFEKVKMPQKKEDPQL) shows a compositional bias: basic and acidic residues. 2 disordered regions span residues 138 to 181 (DNKW…PKSK) and 217 to 263 (VSSP…KKQL). The interaction with clathrin heavy chains stretch occupies residues 163-232 (MPQKKEDPQL…SVSRKVVGSM (70 aa)). Low complexity predominate over residues 217–231 (VSSPSSSVSRKVVGS). Residues S219, S223, S225, S231, and S240 each carry the phosphoserine modification. Over residues 253-263 (SKSEETSKKQL) the composition is skewed to basic and acidic residues. The tract at residues 340–429 (MGGMQASMMG…NQTLSPQMWK (90 aa)) is interaction with PICALM.

In terms of assembly, interacts with ARF1. Interacts with PICALM and clathrin heavy chains.

It localises to the cytoplasm. Its function is as follows. GTPase activating protein that acts on ARF1. Can also activate ARF6 (in vitro). May play a role in clathrin-dependent retrograde transport from early endosomes to the trans-Golgi network. This chain is Stromal membrane-associated protein 2 (SMAP2), found in Bos taurus (Bovine).